Consider the following 208-residue polypeptide: NAD(P)H-hydrate epimerase (208 aa).

The YjeF N-terminal domain occupies M11–Y208. A (6S)-NADPHX-binding site is contributed by N59–D63. 2 residues coordinate K(+): N60 and D122. Residues G126 to P132, Y137, and D155 each bind (6S)-NADPHX. Residue S158 coordinates K(+).

It belongs to the NnrE/AIBP family. It depends on K(+) as a cofactor.

It carries out the reaction (6R)-NADHX = (6S)-NADHX. The enzyme catalyses (6R)-NADPHX = (6S)-NADPHX. In terms of biological role, catalyzes the epimerization of the S- and R-forms of NAD(P)HX, a damaged form of NAD(P)H that is a result of enzymatic or heat-dependent hydration. This is a prerequisite for the S-specific NAD(P)H-hydrate dehydratase to allow the repair of both epimers of NAD(P)HX. The polypeptide is NAD(P)H-hydrate epimerase (Limosilactobacillus fermentum (strain NBRC 3956 / LMG 18251) (Lactobacillus fermentum)).